A 375-amino-acid polypeptide reads, in one-letter code: Alanine racemase (375 aa).

Lys-40 functions as the Proton acceptor; specific for D-alanine in the catalytic mechanism. Position 40 is an N6-(pyridoxal phosphate)lysine (Lys-40). Arg-140 lines the substrate pocket. The Proton acceptor; specific for L-alanine role is filled by Tyr-268. Substrate is bound at residue Met-315.

Belongs to the alanine racemase family. The cofactor is pyridoxal 5'-phosphate.

It catalyses the reaction L-alanine = D-alanine. The protein operates within amino-acid biosynthesis; D-alanine biosynthesis; D-alanine from L-alanine: step 1/1. In terms of biological role, catalyzes the interconversion of L-alanine and D-alanine. May also act on other amino acids. This is Alanine racemase (alr) from Limosilactobacillus reuteri (strain DSM 20016) (Lactobacillus reuteri).